An 89-amino-acid polypeptide reads, in one-letter code: Small ribosomal subunit protein uS15 (89 aa).

Belongs to the universal ribosomal protein uS15 family. Part of the 30S ribosomal subunit. Forms a bridge to the 50S subunit in the 70S ribosome, contacting the 23S rRNA.

In terms of biological role, one of the primary rRNA binding proteins, it binds directly to 16S rRNA where it helps nucleate assembly of the platform of the 30S subunit by binding and bridging several RNA helices of the 16S rRNA. Functionally, forms an intersubunit bridge (bridge B4) with the 23S rRNA of the 50S subunit in the ribosome. The chain is Small ribosomal subunit protein uS15 from Tolumonas auensis (strain DSM 9187 / NBRC 110442 / TA 4).